The primary structure comprises 363 residues: G-protein coupled receptor 4 (363 aa).

The Extracellular portion of the chain corresponds to 1–8 (MGNGTWEG). N3 carries N-linked (GlcNAc...) asparagine glycosylation. Residues 9–45 (CHVDSRVDHLFPPSLYIFVIGVGLPTNCLALWAAYRQ) traverse the membrane as a helical segment. 2 disulfide bridges follow: C9–C258 and C90–C168. Residues 46–49 (VRQR) lie on the Cytoplasmic side of the membrane. Residues 50–80 (NELGVYLMNLSIADLLYICTLPLWVDYFLHH) form a helical membrane-spanning segment. Over 81–85 (DNWIH) the chain is Extracellular. Residues 86–121 (GPGSCKLFGFIFYTNIYISIAFLCCISVDRYLAVAH) traverse the membrane as a helical segment. The Cytoplasmic portion of the chain corresponds to 122-129 (PLRFARLR). Residues 130–156 (RVKTAVAVSSVVWATELGANSVPLFHD) form a helical membrane-spanning segment. Residues 157-172 (ELFRDRYNHTFCFEKF) lie on the Extracellular side of the membrane. Residues 157 to 172 (ELFRDRYNHTFCFEKF) form an extracellular loop 2 (ECL2) region. A glycan (N-linked (GlcNAc...) asparagine) is linked at N164. A helical membrane pass occupies residues 173 to 210 (PMEGWVAWMNLYRVFVGFLFPWALMLLSYRGILRAVRG). At 211–214 (SVST) the chain is on the cytoplasmic side. A helical transmembrane segment spans residues 215 to 250 (ERQEKAKIKRLALSLIAIVLVCFAPYHVLLLSRSAV). Residues 251 to 260 (YLGHPWDCGF) lie on the Extracellular side of the membrane. The chain crosses the membrane as a helical span at residues 261–289 (EERVFSAYHSSLAFTSLNCVADPILYCLV). Over 290–363 (NEGARSDVAK…QLKMLPPPAP (74 aa)) the chain is Cytoplasmic. Residues 344-363 (ASPPSQGDQVQLKMLPPPAP) are disordered.

The protein belongs to the G-protein coupled receptor 1 family.

The protein localises to the cell membrane. Its activity is regulated as follows. Activated by a network of residues that connects an extracellular-facing cavity to Glu-145, a conserved charged residue buried in the transmembrane core of the receptor. Protonation likely drives conformational changes in extracellular loop 2 (ECL2), which stabilizes movement of transmembrane 3 (TM3) and a series of rearrangements that connect the extracellular-facing cavity to Glu-145, a residue only conserved in proton-sensing G-protein coupled receptors. Proton-sensing G-protein coupled receptor activated by extracellular pH, which is required to monitor pH changes and generate adaptive reactions. Activated by an optimal pH of 6.8-7.2. Ligand binding causes a conformation change that triggers signaling via guanine nucleotide-binding proteins (G proteins) and modulates the activity of downstream effectors, such as adenylate cyclase. GPR4 is mainly coupled to G(s) G proteins and mediates activation of adenylate cyclase activity. May also couple with G(q) and G(12)/G(13) G proteins. Acts as a key regulator of respiratory sensitivity to CO2/H(+) in brain retrotrapezoid nucleus neurons: acts by mediating detection of protons generated by the formation of carbonic acid in the blood, an important mechanism to impulse to breathe. Also acts as a regulator of acid secretion in the kidney collecting duct by maintaining acid-base homeostasis in the kidney. Acidosis-induced GPR4 activation increases paracellular gap formation and permeability of vascular endothelial cells, possibly through the G(12)/G(13)/Rho GTPase signaling pathway. This chain is G-protein coupled receptor 4 (GPR4), found in Sus scrofa (Pig).